Here is a 52-residue protein sequence, read N- to C-terminus: Stable plasmid inheritance protein (52 aa).

Residues 6–26 traverse the membrane as a helical segment; the sequence is SSLVWCVLIVCLTLLIFTYLT.

It belongs to the Hok/Gef family.

Its subcellular location is the cell inner membrane. Toxic component of a type I toxin-antitoxin (TA) system. Part of the plasmid maintenance system, encodes a toxic protein that collapses the transmembrane potential and arrests respiration. When the adjacent non-translated flmB (sok) gene is disrupted FlmA no longer functions in plasmid maintenance (i.e. FlmB probably encodes an antisense antitoxin RNA). Translation of FlmA may be coupled to the upstream flmC gene. In Escherichia coli O157:H7, this protein is Stable plasmid inheritance protein (flmA).